Reading from the N-terminus, the 600-residue chain is Pyranose dehydrogenase (600 aa).

The first 25 residues, Met1 to Gly25, serve as a signal peptide directing secretion. Residues Asn99 and Asn114 are each glycosylated (N-linked (GlcNAc...) asparagine). Residue His127 is modified to Tele-8alpha-FAD histidine. Residues Asn199, Asn275, Asn342, Asn399, and Asn507 are each glycosylated (N-linked (GlcNAc...) asparagine). Residue His535 is the Proton acceptor of the active site. The N-linked (GlcNAc...) asparagine glycan is linked to Asn546. His579 is an active-site residue.

Belongs to the GMC oxidoreductase family. In terms of assembly, monomer. It depends on FAD as a cofactor. In terms of processing, N-glycosylated.

Its subcellular location is the secreted. It catalyses the reaction pyranose + acceptor = pyranos-2-ulose + reduced acceptor.. The catalysed reaction is pyranose + acceptor = pyranos-3-ulose + reduced acceptor.. The enzyme catalyses pyranose + acceptor = pyranos-2,3-diulose + reduced acceptor.. It carries out the reaction a pyranoside + acceptor = a pyranosid-3-ulose + reduced acceptor.. It catalyses the reaction a pyranoside + acceptor = a pyranosid-3,4-diulose + reduced acceptor.. Its function is as follows. Catalyzes the single-oxidation or sequential double oxidation reaction of carbohydrates primarily at carbon-2 and/or carbon-3 with the concomitant reduction of the flavin. The enzyme exhibits a broad sugar substrate specificity, oxidizing different aldopyranoses to the corresponding C-1, C-2, C-3 or C-1,2, C-2,3 and C-3,4 (di)dehydro sugars with substrate-specific regioselectivity. Accepts only a narrow range of electron acceptors such as substituted benzoquinones and complexed metal ions and reacts extremely slowly with O(2) as acceptor. May play a role in the natural recycling of plant matter by oxidizing all major monosaccharides in lignocellulose and by reducing quinone compounds or reactive radical species generated during lignin depolymerization. This Agaricus xanthodermus (Poison yellow meadow mushroom) protein is Pyranose dehydrogenase.